The chain runs to 255 residues: tRNA (guanine-N(1)-)-methyltransferase (255 aa).

Residues Gly113 and 133 to 138 (IGDYVL) contribute to the S-adenosyl-L-methionine site.

This sequence belongs to the RNA methyltransferase TrmD family. As to quaternary structure, homodimer.

Its subcellular location is the cytoplasm. It catalyses the reaction guanosine(37) in tRNA + S-adenosyl-L-methionine = N(1)-methylguanosine(37) in tRNA + S-adenosyl-L-homocysteine + H(+). In terms of biological role, specifically methylates guanosine-37 in various tRNAs. In Salmonella schwarzengrund (strain CVM19633), this protein is tRNA (guanine-N(1)-)-methyltransferase.